The following is a 330-amino-acid chain: Adenylate isopentenyltransferase 5, chloroplastic (330 aa).

A chloroplast-targeting transit peptide spans 1–39 (MKPCMTALRQVIQPLSLNFQGNMVDVPFFRRKDKVVFVM). 40-47 (GATGTGKS) is an ATP binding site.

The protein belongs to the IPP transferase family. In terms of tissue distribution, expressed in root primordia, columella root caps, upper part of young inflorescences, and fruit abscission zones.

It localises to the plastid. The protein localises to the chloroplast. The catalysed reaction is dimethylallyl diphosphate + ADP = N(6)-(dimethylallyl)adenosine 5'-diphosphate + diphosphate. It catalyses the reaction dimethylallyl diphosphate + ATP = N(6)-(dimethylallyl)adenosine 5'-triphosphate + diphosphate. Involved in cytokinin biosynthesis. Catalyzes the transfer of an isopentenyl group from dimethylallyl diphosphate (DMAPP) to ATP and ADP. In Arabidopsis thaliana (Mouse-ear cress), this protein is Adenylate isopentenyltransferase 5, chloroplastic (IPT5).